The sequence spans 269 residues: MTHKATEILTGKVMQKSVLITGCSSGIGLESALELKRQGFHVLAGCRKPDDVERMNSMGFTGVLIDLDSPESVDRAADEVIALTDNCLYGIFNNAGFGMYGPLSTISRAQMEQQFSANFFGAHQLTMRLLPAMLPHGEGRIVMTSSVMGLISTPGRGAYAASKYALEAWSDALRMELRHSGIKVSLIEPGPIRTRFTDNVNQTQSDKPVENPGIAARFTLGPEAVVDKVRHAFISEKPKMRYPVTLVTWAVMVLKRLLPGRVMDKILQG.

15-41 lines the NADP(+) pocket; sequence QKSVLITGCSSGIGLESALELKRQGFH. Residue Ser-146 coordinates substrate. Tyr-159 (proton acceptor) is an active-site residue.

Belongs to the short-chain dehydrogenases/reductases (SDR) family.

This is an uncharacterized protein from Escherichia coli O6:H1 (strain CFT073 / ATCC 700928 / UPEC).